The chain runs to 465 residues: Probable citrate synthase, mitochondrial (465 aa).

Catalysis depends on residues His-303, His-349, and Asp-404.

Belongs to the citrate synthase family. In terms of assembly, homodimer.

Its subcellular location is the mitochondrion matrix. It carries out the reaction oxaloacetate + acetyl-CoA + H2O = citrate + CoA + H(+). It participates in carbohydrate metabolism; tricarboxylic acid cycle; isocitrate from oxaloacetate: step 1/2. The sequence is that of Probable citrate synthase, mitochondrial from Glossina morsitans morsitans (Savannah tsetse fly).